Reading from the N-terminus, the 367-residue chain is Anhydro-N-acetylmuramic acid kinase (367 aa).

ATP is bound at residue 11 to 18 (GTSLDGVD).

Belongs to the anhydro-N-acetylmuramic acid kinase family.

It carries out the reaction 1,6-anhydro-N-acetyl-beta-muramate + ATP + H2O = N-acetyl-D-muramate 6-phosphate + ADP + H(+). The protein operates within amino-sugar metabolism; 1,6-anhydro-N-acetylmuramate degradation. It functions in the pathway cell wall biogenesis; peptidoglycan recycling. Functionally, catalyzes the specific phosphorylation of 1,6-anhydro-N-acetylmuramic acid (anhMurNAc) with the simultaneous cleavage of the 1,6-anhydro ring, generating MurNAc-6-P. Is required for the utilization of anhMurNAc either imported from the medium or derived from its own cell wall murein, and thus plays a role in cell wall recycling. In Rhodopseudomonas palustris (strain HaA2), this protein is Anhydro-N-acetylmuramic acid kinase.